A 290-amino-acid chain; its full sequence is Glucuronoxylan 4-O-methyltransferase 2 (290 aa).

A helical transmembrane segment spans residues 8–28 (FISSKLIFICCSILVLFILFL).

This sequence belongs to the methyltransferase superfamily. As to expression, expressed in roots, rosette leaves and stems.

It localises to the golgi apparatus membrane. It carries out the reaction glucuronoxylan D-glucuronate + n S-adenosyl-L-methionine = glucuronoxylan 4-O-methyl-D-glucuronate + n S-adenosyl-L-homocysteine + n H(+). Methyltransferase catalyzing 4-O-methylation of glucuronic acid side chains on xylan. The polypeptide is Glucuronoxylan 4-O-methyltransferase 2 (GXM2) (Arabidopsis thaliana (Mouse-ear cress)).